A 115-amino-acid chain; its full sequence is NADH-ubiquinone oxidoreductase chain 3 (115 aa).

Helical transmembrane passes span 4–24 (FIVM…AFWL), 55–75 (FFLV…LLPL), and 86–106 (ITML…AYEW).

The protein belongs to the complex I subunit 3 family. As to quaternary structure, core subunit of respiratory chain NADH dehydrogenase (Complex I) which is composed of 45 different subunits. Interacts with TMEM186. Interacts with TMEM242.

It is found in the mitochondrion inner membrane. The catalysed reaction is a ubiquinone + NADH + 5 H(+)(in) = a ubiquinol + NAD(+) + 4 H(+)(out). Core subunit of the mitochondrial membrane respiratory chain NADH dehydrogenase (Complex I) which catalyzes electron transfer from NADH through the respiratory chain, using ubiquinone as an electron acceptor. Essential for the catalytic activity of complex I. This Reithrodontomys fulvescens (Fulvous harvest mouse) protein is NADH-ubiquinone oxidoreductase chain 3.